The sequence spans 125 residues: Large ribosomal subunit protein bL12 (125 aa).

It belongs to the bacterial ribosomal protein bL12 family. Homodimer. Part of the ribosomal stalk of the 50S ribosomal subunit. Forms a multimeric L10(L12)X complex, where L10 forms an elongated spine to which 2 to 4 L12 dimers bind in a sequential fashion. Binds GTP-bound translation factors.

Its function is as follows. Forms part of the ribosomal stalk which helps the ribosome interact with GTP-bound translation factors. Is thus essential for accurate translation. The protein is Large ribosomal subunit protein bL12 of Campylobacter lari (strain RM2100 / D67 / ATCC BAA-1060).